Reading from the N-terminus, the 145-residue chain is Lysozyme-like protein 4 (145 aa).

A signal peptide spans 1 to 19 (MQLYLVLLLISYLLTPIGA). The C-type lysozyme domain maps to 20–145 (SILGRCTVAK…LDRWLDGCDL (126 aa)). 4 cysteine pairs are disulfide-bonded: C25–C143, C49–C130, C84–C95, and C91–C109. The active site involves E54.

This sequence belongs to the glycosyl hydrolase 22 family. As to quaternary structure, monomer. In terms of tissue distribution, expressed strongly in testis and in epididymis, and weakly in brain and lung. Detected in sperm (at protein level).

Its subcellular location is the secreted. It is found in the cytoplasmic vesicle. The protein resides in the secretory vesicle. It localises to the acrosome. The protein localises to the cell projection. Its subcellular location is the cilium. It is found in the flagellum. May be involved in fertilization. Has no detectable bacteriolytic in vitro. Has no lysozyme activity in vitro. This is Lysozyme-like protein 4 (Lyzl4) from Mus musculus (Mouse).